The primary structure comprises 341 residues: Transcription factor ETV7 (341 aa).

Residues 33 to 117 form the PNT domain; that stretch reads NLLGEGGICK…ELLQYIKTQR (85 aa). Positions 224–305 form a DNA-binding region, ETS; it reads RLLWDYVYQL…PGQKLLFRFL (82 aa). The interval 315–341 is disordered; the sequence is KHSHLEPLESQEQDRIEFKDKRPEISP.

Belongs to the ETS family. As to expression, expressed in hematopoietic tissues.

It is found in the nucleus. Transcriptional repressor; binds to the DNA sequence 5'-CCGGAAGT-3'. Isoform A does not seem to have a repressor activity. Isoform C does not seem to have a repressor activity. This chain is Transcription factor ETV7 (ETV7), found in Homo sapiens (Human).